The chain runs to 260 residues: Hydroxyethylthiazole kinase (260 aa).

Residues R126 and S172 each coordinate ATP. A substrate-binding site is contributed by G199.

Belongs to the Thz kinase family. Requires Mg(2+) as cofactor.

The enzyme catalyses 5-(2-hydroxyethyl)-4-methylthiazole + ATP = 4-methyl-5-(2-phosphooxyethyl)-thiazole + ADP + H(+). The protein operates within cofactor biosynthesis; thiamine diphosphate biosynthesis; 4-methyl-5-(2-phosphoethyl)-thiazole from 5-(2-hydroxyethyl)-4-methylthiazole: step 1/1. Catalyzes the phosphorylation of the hydroxyl group of 4-methyl-5-beta-hydroxyethylthiazole (THZ). This chain is Hydroxyethylthiazole kinase, found in Burkholderia thailandensis (strain ATCC 700388 / DSM 13276 / CCUG 48851 / CIP 106301 / E264).